The primary structure comprises 271 residues: Fatty acid elongase 2 (271 aa).

A helical transmembrane segment spans residues 16 to 36 (WMIDNVDVAGFLCLLYLGLVW). Asn52 carries N-linked (GlcNAc...) asparagine glycosylation. 2 helical membrane-spanning segments follow: residues 59–79 (VFIMWNLFLSTFSVIGMIVVV) and 110–130 (FWVGVFALSKIPELFDTVLLV). A HxxHH motif motif is present at residues 140 to 144 (HWYHH). Catalysis depends on His143, which acts as the Nucleophile. 3 helical membrane passes run 162–182 (IFVFVAMNLTVHAVMYFYFAM), 194–214 (IAPVITIMQILQMIVGSAVTM), and 241–261 (GVVMYLSYLYLFAALFVESYL).

It belongs to the ELO family.

Its subcellular location is the endoplasmic reticulum membrane. It catalyses the reaction an acyl-CoA + malonyl-CoA + H(+) = a 3-oxoacyl-CoA + CO2 + CoA. The protein operates within lipid metabolism; fatty acid biosynthesis. Functionally, involved in the synthesis of fatty acids. Elongates C10 fatty acids to C14. The protein is Fatty acid elongase 2 of Trypanosoma brucei brucei (strain 927/4 GUTat10.1).